We begin with the raw amino-acid sequence, 276 residues long: Undecaprenyl-diphosphatase 1 (276 aa).

Transmembrane regions (helical) follow at residues 83–103 (FTLNVVIATIPAIALGLLFEK), 108–128 (VLFSPVPVAFALVVGGAIILW), 187–207 (VATEFSFFLAIPIIFGATLYE), 217–237 (VDSLGLFALGLVAAFVSAFVC), and 252–272 (VFAWYRIAFGLFVLLVGYSGW).

It belongs to the UppP family.

The protein localises to the cell inner membrane. It catalyses the reaction di-trans,octa-cis-undecaprenyl diphosphate + H2O = di-trans,octa-cis-undecaprenyl phosphate + phosphate + H(+). Catalyzes the dephosphorylation of undecaprenyl diphosphate (UPP). Confers resistance to bacitracin. This Burkholderia cenocepacia (strain HI2424) protein is Undecaprenyl-diphosphatase 1.